The primary structure comprises 320 residues: MARKKIALIGAGNIGGTLAHLAAQKELGDIVLFDVVEGVPQGKALDLSQCGPVEGFDANIIGTNDYKGIAGADVIIVTAGVARKPGMSRDDLLGINLKVMKAVGEGIRDNAPDAFVICITNPLDAMVWALREFSGLPANKVVGMAGVLDSARFSTFLAWEFGVSIRDVNTFVLGGHGDTMVPVTQYSTVNGIPVPDLVKMGLSTQEKIDAIVQRTRSGGGEIVGLLKTGSAFYAPAASGIAMAEAYLNDQKRILPCAAYVDGEYGVNGLYVGVPVLIGANGVEKVIEIELDDEAKGNLQVSVDAVKELLEACKGIDPSLA.

NAD(+)-binding positions include 10-15 (GAGNIG) and D34. Positions 83 and 89 each coordinate substrate. NAD(+) is bound by residues N96 and 119–121 (ITN). 2 residues coordinate substrate: N121 and R152. H176 functions as the Proton acceptor in the catalytic mechanism.

This sequence belongs to the LDH/MDH superfamily. MDH type 3 family.

The enzyme catalyses (S)-malate + NAD(+) = oxaloacetate + NADH + H(+). Functionally, catalyzes the reversible oxidation of malate to oxaloacetate. The chain is Malate dehydrogenase from Novosphingobium aromaticivorans (strain ATCC 700278 / DSM 12444 / CCUG 56034 / CIP 105152 / NBRC 16084 / F199).